A 361-amino-acid chain; its full sequence is Phosphoserine aminotransferase (361 aa).

Arg-42 serves as a coordination point for L-glutamate. Pyridoxal 5'-phosphate contacts are provided by residues 76 to 77 (AR), Trp-102, Thr-153, Asp-173, and Gln-196. The residue at position 197 (Lys-197) is an N6-(pyridoxal phosphate)lysine. Residue 238–239 (NT) participates in pyridoxal 5'-phosphate binding.

The protein belongs to the class-V pyridoxal-phosphate-dependent aminotransferase family. SerC subfamily. As to quaternary structure, homodimer. Pyridoxal 5'-phosphate serves as cofactor.

The protein localises to the cytoplasm. The enzyme catalyses O-phospho-L-serine + 2-oxoglutarate = 3-phosphooxypyruvate + L-glutamate. It catalyses the reaction 4-(phosphooxy)-L-threonine + 2-oxoglutarate = (R)-3-hydroxy-2-oxo-4-phosphooxybutanoate + L-glutamate. It functions in the pathway amino-acid biosynthesis; L-serine biosynthesis; L-serine from 3-phospho-D-glycerate: step 2/3. It participates in cofactor biosynthesis; pyridoxine 5'-phosphate biosynthesis; pyridoxine 5'-phosphate from D-erythrose 4-phosphate: step 3/5. Its function is as follows. Catalyzes the reversible conversion of 3-phosphohydroxypyruvate to phosphoserine and of 3-hydroxy-2-oxo-4-phosphonooxybutanoate to phosphohydroxythreonine. The chain is Phosphoserine aminotransferase from Pectobacterium carotovorum subsp. carotovorum (strain PC1).